The sequence spans 376 residues: TelA-like protein SE_1089 (376 aa).

It belongs to the TelA family.

In Staphylococcus epidermidis (strain ATCC 12228 / FDA PCI 1200), this protein is TelA-like protein SE_1089.